The following is a 1445-amino-acid chain: Tensin-3 (1445 aa).

Residues 1–170 form the Phosphatase tensin-type domain; sequence MEEGHGLDLT…QFLSGLLSGS (170 aa). In terms of domain architecture, C2 tensin-type spans 175–301; it reads ASPLFLHFVI…GKVELVFSAT (127 aa). Threonine 323 carries the phosphothreonine modification. Residues serine 332 and serine 361 each carry the phosphoserine modification. Positions 358 to 421 are disordered; that stretch reads RKKSSSDPGI…GTRRGLSAQE (64 aa). Positions 386 to 400 are enriched in polar residues; it reads TLSVSSDSGHSTASA. Phosphoserine occurs at positions 440 and 516. A disordered region spans residues 538–568; sequence VPDLGLGMDGPYERERTFGSREPKQPQPLLR. Positions 548–561 are enriched in basic and acidic residues; sequence PYERERTFGSREPK. Serine 571 is modified (phosphoserine). Disordered stretches follow at residues 618 to 695 and 717 to 769; these read DNPG…TLDI and PTHM…QPLG. Residue threonine 632 is modified to Phosphothreonine. Phosphoserine is present on residues serine 649, serine 660, serine 687, and serine 690. A compositionally biased stretch (polar residues) spans 723–733; sequence LGSQANGSVSP. Phosphoserine occurs at positions 735 and 776. Tyrosine 780 carries the post-translational modification Phosphotyrosine. Residues serine 811, serine 866, and serine 901 each carry the phosphoserine modification. Disordered regions lie at residues 859–981 and 1076–1127; these read ALRH…TRKD and GHSS…PHSG. The segment covering 864-873 has biased composition (pro residues); sequence PFSPPEPPLS. Polar residues predominate over residues 914 to 935; it reads ASSTPSFQQAFASSCTISSNGP. The segment covering 1099 to 1109 has biased composition (basic and acidic residues); it reads PEKKRASEGDR. A compositionally biased stretch (low complexity) spans 1110-1127; that stretch reads SLGSVSPSSSGFSSPHSG. A phosphoserine mark is found at serine 1149 and serine 1154. The 111-residue stretch at 1172 to 1282 folds into the SH2 domain; that stretch reads WYKADISREQ…ALPCKLLIPE (111 aa). A phosphoserine mark is found at serine 1293 and serine 1441. The PTB domain occupies 1310–1444; that stretch reads ACNVWYLNSV…SKVMIGSPKK (135 aa).

Belongs to the PTEN phosphatase protein family. As to quaternary structure, interacts with EGFR; EGF promotes the interaction with EGFR. Interacts with PTK2/FAK1 and BCAR1. Tyrosine phosphorylation is critical for these interactions. Interacts with Rho GTPase-activating protein DLC1 and with the regulatory p85 subunit of the PI3K kinase complex; in resting cells, interacts (via C2 tensin-type domain) with DLC1 but, following growth factor stimulation, TNS3 is phosphorylated which leads to weakened interaction with DLC1 and enhanced interaction (via C2 tensin-type domain) with p85 while DLC1 interaction with PTEN increases. Interacts (when phosphorylated on the SH2 domain) with integrins ITGB1, ITGB3 and ITGB5 and with scaffolding protein PEAK1 (phosphorylated on 'Tyr-635'); mediates the association of PEAK1 with ITGB1, ITGB3 and ITGB5. Interacts (via N-terminus) with DOCK5 (via N-terminus); the interaction increases DOCK5 guanine nucleotide exchange activity towards Rac. Interacts with receptor tyrosine kinase MET. Phosphorylated on Ser/Thr and Tyr residues. Phosphorylated on Thr-323 in the C2-type tensin domain following EGF stimulation which changes its binding preference from DLC1 to the p85 regulatory subunit of the PI3K kinase complex. EGF induces tyrosine phosphorylation in a time- and dose-dependent manner. Phosphorylation of the SH2 domain enhances interaction with PEAK1. In terms of tissue distribution, expressed in umbilical vein endothelial cells, epithelial cells, and fibroblasts cells (at protein level). Highly expressed in thyroid, kidney and placenta. Low expression in heart, skeletal muscle, spleen, liver, and lung. Expressed at higher levels in tonsil-derived mesenchymal stem cells (MSCs) than in adipose tissue-derived MSCs or bone marrow-derived MSCs. Expressed in tumor endothelial cells. Expression seems to be down-regulated in thyroid tumor tissues and in anaplastic carcinomas.

Its subcellular location is the cell junction. The protein localises to the focal adhesion. It localises to the cell projection. The protein resides in the podosome. Its function is as follows. May act as a protein phosphatase and/or a lipid phosphatase. Involved in the dissociation of the integrin-tensin-actin complex. EGF activates TNS4 and down-regulates TNS3 which results in capping the tail of ITGB1. Increases DOCK5 guanine nucleotide exchange activity towards Rac and plays a role in osteoclast podosome organization. Enhances RHOA activation in the presence of DLC1. Required for growth factor-induced epithelial cell migration; growth factor stimulation induces TNS3 phosphorylation which changes its binding preference from DLC1 to the p85 regulatory subunit of the PI3K kinase complex, displacing PI3K inhibitor PTEN and resulting in translocation of the TNS3-p85 complex to the leading edge of migrating cells to promote RAC1 activation. Meanwhile, PTEN switches binding preference from p85 to DLC1 and the PTEN-DLC1 complex translocates to the posterior of migrating cells to activate RHOA. Acts as an adapter protein by bridging the association of scaffolding protein PEAK1 with integrins ITGB1, ITGB3 and ITGB5 which contributes to the promotion of cell migration. Controls tonsil-derived mesenchymal stem cell proliferation and differentiation by regulating the activity of integrin ITGB1. This is Tensin-3 (TNS3) from Homo sapiens (Human).